A 430-amino-acid polypeptide reads, in one-letter code: Serine--tRNA ligase (430 aa).

Position 237–239 (237–239) interacts with L-serine; sequence TAE. 268–270 contacts ATP; the sequence is RSE. Glu291 lines the L-serine pocket. 355-358 contacts ATP; sequence EISS. Ser391 lines the L-serine pocket.

This sequence belongs to the class-II aminoacyl-tRNA synthetase family. Type-1 seryl-tRNA synthetase subfamily. In terms of assembly, homodimer. The tRNA molecule binds across the dimer.

It localises to the cytoplasm. The enzyme catalyses tRNA(Ser) + L-serine + ATP = L-seryl-tRNA(Ser) + AMP + diphosphate + H(+). The catalysed reaction is tRNA(Sec) + L-serine + ATP = L-seryl-tRNA(Sec) + AMP + diphosphate + H(+). It participates in aminoacyl-tRNA biosynthesis; selenocysteinyl-tRNA(Sec) biosynthesis; L-seryl-tRNA(Sec) from L-serine and tRNA(Sec): step 1/1. Functionally, catalyzes the attachment of serine to tRNA(Ser). Is also able to aminoacylate tRNA(Sec) with serine, to form the misacylated tRNA L-seryl-tRNA(Sec), which will be further converted into selenocysteinyl-tRNA(Sec). This chain is Serine--tRNA ligase, found in Salmonella schwarzengrund (strain CVM19633).